A 514-amino-acid polypeptide reads, in one-letter code: ATP synthase subunit alpha (514 aa).

170–177 contacts ATP; sequence GDRQIGKT.

It belongs to the ATPase alpha/beta chains family. F-type ATPases have 2 components, CF(1) - the catalytic core - and CF(0) - the membrane proton channel. CF(1) has five subunits: alpha(3), beta(3), gamma(1), delta(1), epsilon(1). CF(0) has three main subunits: a(1), b(2) and c(9-12). The alpha and beta chains form an alternating ring which encloses part of the gamma chain. CF(1) is attached to CF(0) by a central stalk formed by the gamma and epsilon chains, while a peripheral stalk is formed by the delta and b chains.

The protein resides in the cell inner membrane. It catalyses the reaction ATP + H2O + 4 H(+)(in) = ADP + phosphate + 5 H(+)(out). Functionally, produces ATP from ADP in the presence of a proton gradient across the membrane. The alpha chain is a regulatory subunit. The protein is ATP synthase subunit alpha of Marinobacter nauticus (strain ATCC 700491 / DSM 11845 / VT8) (Marinobacter aquaeolei).